Here is a 1179-residue protein sequence, read N- to C-terminus: Serine/threonine-protein kinase pakG (1179 aa).

A coiled-coil region spans residues serine 12–valine 53. The region spanning isoleucine 111–aspartate 124 is the CRIB domain. The region spanning phenylalanine 139–leucine 390 is the Protein kinase domain. ATP contacts are provided by residues leucine 145 to valine 153 and lysine 168. Aspartate 257 (proton acceptor) is an active-site residue. Disordered regions lie at residues lysine 414–aspartate 469, isoleucine 589–asparagine 631, serine 705–leucine 1086, and threonine 1121–lysine 1179. Residues asparagine 621–glutamate 668 adopt a coiled-coil conformation. 2 stretches are compositionally biased toward low complexity: residues serine 705–serine 723 and leucine 743–proline 761. The segment covering serine 762 to proline 776 has biased composition (pro residues). 2 stretches are compositionally biased toward low complexity: residues leucine 777–proline 788 and asparagine 812–asparagine 833. Residues valine 834–arginine 857 are compositionally biased toward polar residues. Low complexity predominate over residues phenylalanine 864–serine 891. A compositionally biased stretch (polar residues) spans tyrosine 892–threonine 946. A compositionally biased stretch (pro residues) spans arginine 954–proline 963. Composition is skewed to low complexity over residues methionine 964–alanine 997, threonine 1024–serine 1046, and isoleucine 1053–asparagine 1077. Residues threonine 1121–lysine 1135 show a composition bias toward polar residues. Positions asparagine 1137 to serine 1158 are enriched in low complexity.

The protein belongs to the protein kinase superfamily. STE Ser/Thr protein kinase family. STE20 subfamily. Mg(2+) is required as a cofactor.

It catalyses the reaction L-seryl-[protein] + ATP = O-phospho-L-seryl-[protein] + ADP + H(+). It carries out the reaction L-threonyl-[protein] + ATP = O-phospho-L-threonyl-[protein] + ADP + H(+). The chain is Serine/threonine-protein kinase pakG from Dictyostelium discoideum (Social amoeba).